Reading from the N-terminus, the 530-residue chain is Glucocorticoid modulatory element-binding protein 2 (530 aa).

The SAND domain occupies 81–163; the sequence is EEGENLEAEI…RKIMDSGELD (83 aa). Cysteine 110 serves as a coordination point for Zn(2+). The DNA site is built by lysine 136, lysine 140, lysine 143, and arginine 154. Lysine 155 participates in a covalent cross-link: Glycyl lysine isopeptide (Lys-Gly) (interchain with G-Cter in SUMO1); alternate. A Glycyl lysine isopeptide (Lys-Gly) (interchain with G-Cter in SUMO2); alternate cross-link involves residue lysine 155. Histidine 167, cysteine 171, and cysteine 175 together coordinate Zn(2+). Residues 304–348 are a coiled coil; the sequence is QMDRSREQYARDLAALEQQCDEHRRRAKELKHKSQHLSNVLMTLT. Position 373 is a phosphoserine (serine 373).

In terms of assembly, homodimer, and heterodimer of GMEB1 and GMEB2. GMEB1 and GMEB2 form the parvovirus initiator complex (PIF). Interacts with the glucocorticoid receptor (NR3C1). May interact with CREB-binding protein (CBP). As to expression, expressed in peripheral blood lymphocytes and fetal liver. Expressed preferentially in reproductive and/or developmentally important cells, such as testis, placenta, bone marrow and fetal tissues.

It localises to the nucleus. The protein resides in the cytoplasm. In terms of biological role, trans-acting factor that binds to glucocorticoid modulatory elements (GME) present in the TAT (tyrosine aminotransferase) promoter and increases sensitivity to low concentrations of glucocorticoids. Also binds to the transferrin receptor promoter. Essential auxiliary factor for the replication of parvoviruses. The protein is Glucocorticoid modulatory element-binding protein 2 (GMEB2) of Homo sapiens (Human).